A 954-amino-acid chain; its full sequence is Mitogen-activated protein kinase kinase kinase 10 (954 aa).

The 66-residue stretch at 16–81 (PAGPVWTAVF…PSNYVAPGAP (66 aa)) folds into the SH3 domain. In terms of domain architecture, Protein kinase spans 98 to 360 (LQLEEIIGVG…GSILKRLEVI (263 aa)). ATP contacts are provided by residues 104 to 112 (IGVGGFGKV) and lysine 125. The active-site Proton acceptor is the aspartate 222. Residue threonine 258 is modified to Phosphothreonine; by autocatalysis. Position 262 is a phosphoserine; by autocatalysis and MAP4K1 (serine 262). 2 leucine-zipper regions span residues 384–405 (IQHM…EEEL) and 419–440 (LRRR…ELHL). 3 disordered regions span residues 490–665 (PTLD…RWGH), 716–739 (RFPR…PGLG), and 757–954 (STRS…HGSH). Phosphoserine is present on residues serine 498, serine 502, and serine 506. Residues 501-511 (ASPPASPSIIP) show a composition bias toward low complexity. A Phosphothreonine modification is found at threonine 558. Residues 566–578 (QKERVGGEERLKG) are compositionally biased toward basic and acidic residues. Acidic residues predominate over residues 611–620 (EMEEFAEAED). Over residues 631-640 (STPSYLSVPL) the composition is skewed to low complexity. Residues 773–790 (APSPPPSPPAPTPTPSPS) show a composition bias toward pro residues. Arginine 857 carries the omega-N-methylarginine modification. Pro residues predominate over residues 913-927 (PSRPDTPESPGPPSV).

The protein belongs to the protein kinase superfamily. STE Ser/Thr protein kinase family. MAP kinase kinase kinase subfamily. In terms of assembly, homodimer. Interacts with SH3RF2. Mg(2+) is required as a cofactor. Post-translationally, autophosphorylation on serine and threonine residues within the activation loop plays a role in enzyme activation. Expressed in brain and skeletal muscle.

The enzyme catalyses L-seryl-[protein] + ATP = O-phospho-L-seryl-[protein] + ADP + H(+). It catalyses the reaction L-threonyl-[protein] + ATP = O-phospho-L-threonyl-[protein] + ADP + H(+). Its activity is regulated as follows. Homodimerization via the leucine zipper domains is required for autophosphorylation and subsequent activation. Functionally, activates the JUN N-terminal pathway. The sequence is that of Mitogen-activated protein kinase kinase kinase 10 (MAP3K10) from Homo sapiens (Human).